A 177-amino-acid polypeptide reads, in one-letter code: Disulfide bond formation protein B (177 aa).

At 1 to 14 (MLIFFKNLSMKRST) the chain is on the cytoplasmic side. Residues 15–31 (WILLFISALVLESTALY) traverse the membrane as a helical segment. The Periplasmic segment spans residues 32-49 (FQHGMGLNPCVMCIYERV). The cysteines at positions 41 and 44 are disulfide-linked. A helical membrane pass occupies residues 50–65 (AILGILFSGLIGCIAP). The Cytoplasmic segment spans residues 66–72 (KWLVLRI). The chain crosses the membrane as a helical span at residues 73–90 (LALLIGLGSAVKGLLLAI). Topologically, residues 91–145 (KHLDYQINVYPWNQCAMVPDFPQTLPLDKWFPNIFMPSGSCSDITWSFLGFSMVQ) are periplasmic. A disulfide bond links Cys-105 and Cys-131. The chain crosses the membrane as a helical span at residues 146 to 164 (WIIVIFACYFLFFIILSIS). At 165–177 (QFKKVRKNRMLFR) the chain is on the cytoplasmic side.

This sequence belongs to the DsbB family.

It localises to the cell inner membrane. Its function is as follows. Required for disulfide bond formation in some periplasmic proteins. Acts by oxidizing the DsbA protein. The protein is Disulfide bond formation protein B of Histophilus somni (strain 129Pt) (Haemophilus somnus).